We begin with the raw amino-acid sequence, 143 residues long: Transcriptional regulator MraZ (143 aa).

SpoVT-AbrB domains follow at residues 5–47 (TYTP…PKEE) and 76–119 (ADEQ…DAQA).

The protein belongs to the MraZ family. Forms oligomers.

It is found in the cytoplasm. The protein localises to the nucleoid. The polypeptide is Transcriptional regulator MraZ (Corynebacterium glutamicum (strain R)).